Consider the following 227-residue polypeptide: Casparian strip membrane protein 2 (227 aa).

Residues 1–59 lie on the Cytoplasmic side of the membrane; that stretch reads MSSTSEATVIHMDGAAGKTPATAVPPPPPPAPTAPVQQQRKAGGVPFLLRSGAEGFRRC. The disordered stretch occupies residues 17 to 37; it reads GKTPATAVPPPPPPAPTAPVQ. Residues 23–33 are compositionally biased toward pro residues; that stretch reads AVPPPPPPAPT. Residues 60–80 traverse the membrane as a helical segment; the sequence is MALLDLLLRVAAMGPTLAAAI. The Extracellular segment spans residues 81-107; that stretch reads STGTSDETLSVFTHYFQFRARFDDFSA. A helical transmembrane segment spans residues 108-128; the sequence is FTFFMVANAVAAGYLLMSLPF. The Cytoplasmic segment spans residues 129–149; it reads SAFGVIRPKATSVRLLLLICD. A helical membrane pass occupies residues 150-170; that stretch reads TIMVVLVTAAASAAAAIVYVA. Topologically, residues 171–197 are extracellular; the sequence is HEGNRRANWVPICMQFHGFCKRTSGAV. The chain crosses the membrane as a helical span at residues 198 to 218; the sequence is VASFLAVLIFILLVFLGACAI. Residues 219-227 lie on the Cytoplasmic side of the membrane; that stretch reads RRRHTTTKH.

The protein belongs to the Casparian strip membrane proteins (CASP) family. Homodimer and heterodimers.

Its subcellular location is the cell membrane. Functionally, regulates membrane-cell wall junctions and localized cell wall deposition. Required for establishment of the Casparian strip membrane domain (CSD) and the subsequent formation of Casparian strips, a cell wall modification of the root endodermis that determines an apoplastic barrier between the intraorganismal apoplasm and the extraorganismal apoplasm and prevents lateral diffusion. This chain is Casparian strip membrane protein 2, found in Brachypodium distachyon (Purple false brome).